A 214-amino-acid polypeptide reads, in one-letter code: Intermembrane phospholipid transport system binding protein MlaC (214 aa).

The N-terminal stretch at Met-1–Ala-28 is a signal peptide.

The protein belongs to the MlaC/ttg2D family.

Its subcellular location is the periplasm. In terms of biological role, involved in a phospholipid transport pathway that maintains lipid asymmetry in the outer membrane by retrograde trafficking of phospholipids from the outer membrane to the inner membrane. May transfer phospholipid across the periplasmic space and deliver it to the MlaFEDB complex at the inner membrane. This chain is Intermembrane phospholipid transport system binding protein MlaC, found in Haemophilus influenzae (strain ATCC 51907 / DSM 11121 / KW20 / Rd).